The chain runs to 436 residues: 3-ketoacyl-CoA thiolase (436 aa).

The active-site Acyl-thioester intermediate is the Cys-99. Catalysis depends on proton acceptor residues His-392 and Cys-422.

Belongs to the thiolase-like superfamily. Thiolase family. As to quaternary structure, heterotetramer of two alpha chains (FadJ) and two beta chains (FadI).

It localises to the cytoplasm. It catalyses the reaction an acyl-CoA + acetyl-CoA = a 3-oxoacyl-CoA + CoA. It participates in lipid metabolism; fatty acid beta-oxidation. Its function is as follows. Catalyzes the final step of fatty acid oxidation in which acetyl-CoA is released and the CoA ester of a fatty acid two carbons shorter is formed. The sequence is that of 3-ketoacyl-CoA thiolase from Yersinia pestis bv. Antiqua (strain Angola).